We begin with the raw amino-acid sequence, 147 residues long: MADNDNEDIIMDDLVEEYVETEEENFVDSEEESEDKDEIVESPSICEGFVQASSQTLVIIPDNERITSNVLTTFEATRLVAVRAQQLAINGSTMLKKKYSSPIDIAKQELFNRKIPLLVMRCIKVTPEGQKIVEIWNPREMGIPLLD.

This sequence belongs to the archaeal RpoK/eukaryotic RPB6 RNA polymerase subunit family. As to quaternary structure, part of the viral DNA-directed RNA polymerase that consists of 8 polII-like subunits (RPB1, RPB2, RPB3, RPB5, RPB6, RPB7, RPB9, RPB10), a capping enzyme and a termination factor.

It is found in the host cytoplasm. It localises to the virion. Component of the DNA-directed RNA polymerase (RNAP) that catalyzes the transcription in the cytoplasm of viral DNA into RNA using the four ribonucleoside triphosphates as substrates. The sequence is that of DNA-directed RNA polymerase RPB6 homolog from Ornithodoros (relapsing fever ticks).